Reading from the N-terminus, the 145-residue chain is Nicking endonuclease (145 aa).

The tract at residues 126 to 145 (NPQEKTQVKTETKSGFARFL) is disordered.

Its function is as follows. Endonuclease responsible for the single-chain interruptions (nicks) located at specific positions in the minus strand of the viral genome. In Escherichia phage T5 (Enterobacteria phage T5), this protein is Nicking endonuclease.